A 509-amino-acid chain; its full sequence is Maturase K (509 aa).

Belongs to the intron maturase 2 family. MatK subfamily.

The protein localises to the plastid. The protein resides in the chloroplast. In terms of biological role, usually encoded in the trnK tRNA gene intron. Probably assists in splicing its own and other chloroplast group II introns. This chain is Maturase K, found in Abies firma (Momi fir).